The following is a 444-amino-acid chain: Tubulin beta 8B (444 aa).

The short motif at 1–4 (MREI) is the MREI motif element. The GTP site is built by Q11, E69, S138, G142, T143, and G144. Residue E69 coordinates Mg(2+). S172 is subject to Phosphoserine; by CDK1. The GTP site is built by N204 and N226. A disordered region spans residues 421–444 (EYQQYQDATAEEEEDEEYAEEEVA). A compositionally biased stretch (acidic residues) spans 429 to 444 (TAEEEEDEEYAEEEVA). Position 436 is a 5-glutamyl polyglutamate (E436).

Belongs to the tubulin family. Dimer of alpha and beta chains. A typical microtubule is a hollow water-filled tube with an outer diameter of 25 nm and an inner diameter of 15 nM. Alpha-beta heterodimers associate head-to-tail to form protofilaments running lengthwise along the microtubule wall with the beta-tubulin subunit facing the microtubule plus end conferring a structural polarity. Microtubules usually have 13 protofilaments but different protofilament numbers can be found in some organisms and specialized cells. Mg(2+) is required as a cofactor. Post-translationally, some glutamate residues at the C-terminus are polyglutamylated, resulting in polyglutamate chains on the gamma-carboxyl group. Polyglutamylation plays a key role in microtubule severing by spastin (SPAST). SPAST preferentially recognizes and acts on microtubules decorated with short polyglutamate tails: severing activity by SPAST increases as the number of glutamates per tubulin rises from one to eight, but decreases beyond this glutamylation threshold. Glutamylation is also involved in cilia motility. Some glutamate residues at the C-terminus are monoglycylated but not polyglycylated due to the absence of functional TTLL10 in human. Monoglycylation is mainly limited to tubulin incorporated into cilia and flagella axonemes, which is required for their stability and maintenance. Flagella glycylation controls sperm motility. Both polyglutamylation and monoglycylation can coexist on the same protein on adjacent residues, and lowering glycylation levels increases polyglutamylation, and reciprocally. In terms of processing, phosphorylated on Ser-172 by CDK1 during the cell cycle, from metaphase to telophase, but not in interphase. This phosphorylation inhibits tubulin incorporation into microtubules.

It is found in the cytoplasm. It localises to the cytoskeleton. Functionally, tubulin is the major constituent of microtubules, a cylinder consisting of laterally associated linear protofilaments composed of alpha- and beta-tubulin heterodimers. Microtubules grow by the addition of GTP-tubulin dimers to the microtubule end, where a stabilizing cap forms. Below the cap, tubulin dimers are in GDP-bound state, owing to GTPase activity of alpha-tubulin. This Homo sapiens (Human) protein is Tubulin beta 8B.